A 271-amino-acid polypeptide reads, in one-letter code: Putative phosphoenolpyruvate synthase regulatory protein (271 aa).

Residue Gly151–Thr158 coordinates ADP.

Belongs to the pyruvate, phosphate/water dikinase regulatory protein family. PSRP subfamily.

The enzyme catalyses [pyruvate, water dikinase] + ADP = [pyruvate, water dikinase]-phosphate + AMP + H(+). The catalysed reaction is [pyruvate, water dikinase]-phosphate + phosphate + H(+) = [pyruvate, water dikinase] + diphosphate. In terms of biological role, bifunctional serine/threonine kinase and phosphorylase involved in the regulation of the phosphoenolpyruvate synthase (PEPS) by catalyzing its phosphorylation/dephosphorylation. This Burkholderia orbicola (strain MC0-3) protein is Putative phosphoenolpyruvate synthase regulatory protein.